The sequence spans 360 residues: Mannose-1-phosphate guanyltransferase beta-A (360 aa).

It belongs to the transferase hexapeptide repeat family.

The enzyme catalyses alpha-D-mannose 1-phosphate + GTP + H(+) = GDP-alpha-D-mannose + diphosphate. It functions in the pathway nucleotide-sugar biosynthesis; GDP-alpha-D-mannose biosynthesis; GDP-alpha-D-mannose from alpha-D-mannose 1-phosphate (GTP route): step 1/1. This is Mannose-1-phosphate guanyltransferase beta-A (gmppb-a) from Xenopus laevis (African clawed frog).